Reading from the N-terminus, the 493-residue chain is Glutamyl-tRNA(Gln) amidotransferase subunit A (493 aa).

Active-site charge relay system residues include Lys78 and Ser158. The active-site Acyl-ester intermediate is the Ser182.

The protein belongs to the amidase family. GatA subfamily. As to quaternary structure, heterotrimer of A, B and C subunits.

It catalyses the reaction L-glutamyl-tRNA(Gln) + L-glutamine + ATP + H2O = L-glutaminyl-tRNA(Gln) + L-glutamate + ADP + phosphate + H(+). In terms of biological role, allows the formation of correctly charged Gln-tRNA(Gln) through the transamidation of misacylated Glu-tRNA(Gln) in organisms which lack glutaminyl-tRNA synthetase. The reaction takes place in the presence of glutamine and ATP through an activated gamma-phospho-Glu-tRNA(Gln). The polypeptide is Glutamyl-tRNA(Gln) amidotransferase subunit A (Methylorubrum extorquens (strain CM4 / NCIMB 13688) (Methylobacterium extorquens)).